Consider the following 1858-residue polypeptide: Inactive histone-lysine N-methyltransferase 2E (1858 aa).

The HCFC1-binding motif (HBM) signature appears at 63 to 66; the sequence is DHNY. The PHD-type zinc finger occupies 118 to 166; sequence VTRCICGFTHDDGYMICCDKCSVWQHIDCMGIDRQHIPDTYLCERCQPR. Cys121, Cys123, Cys135, Cys138, His143, Cys146, Cys160, and Cys163 together coordinate Zn(2+). Positions 217–269 are disordered; the sequence is ASRVSKVNDKRRKKSGEKEQHISKCKKAFREGSRKSSRVKGSAPEIDPSSDGS. Residues 232 to 250 show a composition bias toward basic and acidic residues; it reads GEKEQHISKCKKAFREGSR. The 118-residue stretch at 330 to 447 folds into the SET domain; sequence PPVESHIQKN…KGTEITIAFD (118 aa). O-linked (GlcNAc) serine glycosylation is present at Ser435. Thr440 carries O-linked (GlcNAc) threonine glycosylation. Residues 475–530 form a disordered region; that stretch reads SESMENINSGYETRRKKGKKDKDISKEKDTQNQNITLDCEGTTNKMKSPETKQRKL. Residues 494-504 show a composition bias toward basic and acidic residues; sequence KDKDISKEKDT. A compositionally biased stretch (polar residues) spans 505–520; it reads QNQNITLDCEGTTNKM. Positions 559-615 form a coiled coil; the sequence is VEMESEEQIAERKRKMTREERKMEAILQAFARLEKREKRREQALERISTAKTEVKTE. Ser623 is modified (phosphoserine). Residues 630 to 687 are disordered; sequence EQAKEENASKPTPAKVNRTKQRKSFSRSRTHIGQQRRRHRTVSMCSDIQPSSPDIEVT. A compositionally biased stretch (basic residues) spans 646-670; it reads NRTKQRKSFSRSRTHIGQQRRRHRT. Positions 672–687 are enriched in polar residues; sequence SMCSDIQPSSPDIEVT. Residues Ser837 and Ser845 each carry the phosphoserine modification. Low complexity-rich tracts occupy residues 887–901 and 933–957; these read TSTP…PTHT and PVTP…PESS. Disordered regions lie at residues 887-960 and 1039-1068; these read TSTP…SPEI and LETP…SSWV. Residues 1039-1048 show a composition bias toward basic and acidic residues; it reads LETPAHDRAE. Positions 1049–1068 are enriched in polar residues; sequence PNSQLDSTHSGRGTMYSSWV. Ser1070 carries the phosphoserine modification. Disordered stretches follow at residues 1164-1561 and 1581-1835; these read KRQR…QNQQ and VFTS…PVPG. 2 stretches are compositionally biased toward polar residues: residues 1186–1206 and 1222–1235; these read PHAS…NDNG and TVYN…SNNC. Ser1273 bears the Phosphoserine mark. Positions 1273 to 1282 are enriched in basic and acidic residues; sequence SDHRKDKDSG. Low complexity-rich tracts occupy residues 1285–1303 and 1349–1362; these read SPCV…SSHS and KSPP…SPGS. At Ser1359 the chain carries Phosphoserine. 2 stretches are compositionally biased toward polar residues: residues 1400–1432 and 1506–1542; these read QQKQ…SQKL and LPAN…LNST. Pro residues predominate over residues 1543-1553; it reads APPPPPPPPPS. The segment covering 1581–1599 has biased composition (polar residues); the sequence is VFTSGPNQALPGTTSQQTV. Over residues 1626–1637 the composition is skewed to pro residues; sequence VPPPPPPPPAPG. The segment covering 1642–1651 has biased composition (polar residues); the sequence is QQPNSHQQHS. Pro residues predominate over residues 1677–1687; that stretch reads LPPPPPPPGPA. Positions 1698–1711 are enriched in polar residues; the sequence is TGLQGLQAQHQHVV. Positions 1714-1724 are enriched in pro residues; the sequence is APPPPPPPPPS. Residues 1798 to 1808 are compositionally biased toward polar residues; sequence QGPNSIPTPTA.

The protein belongs to the class V-like SAM-binding methyltransferase superfamily. Histone-lysine methyltransferase family. TRX/MLL subfamily. As to quaternary structure, component of a complex composed of KMT2E (isoform 3), OGT and USP7; the complex stabilizes KMT2E, preventing KMT2E ubiquitination and proteasomal-mediated degradation. Isoform 3 interacts (via N-terminus) with OGT (via TRP repeats). Isoform 3 interacts with deubiquitinating enzyme USP7 (via MATH domain). Isoform 3 interacts (via HBM motif) with HCFC1 (via Kelch domain). Isoform 3 interacts with E2F1; the interaction is probably indirect and is mediated via HCFC1. Post-translationally, ubiquitinated. Deubiquitinated by USP7. O-glycosylated at Ser-435 and Thr-440 in the SET domain by OGT which probably prevents KMT2E proteasomal-mediated degradation. Widely expressed in both adult and fetal tissues. Highest levels of expression observed in fetal thymus and kidney and in adult hematopoietic tissues, jejunum and cerebellum. Isoform NKp44L: Not detected on circulating cells from healthy individuals, but is expressed on a large panel of tumor and transformed cells.

The protein localises to the chromosome. The protein resides in the cytoplasm. It is found in the cytoskeleton. It localises to the microtubule organizing center. Its subcellular location is the centrosome. The protein localises to the nucleus speckle. The protein resides in the nucleus. It is found in the nucleoplasm. It localises to the cell membrane. Its function is as follows. Associates with chromatin regions downstream of transcriptional start sites of active genes and thus regulates gene transcription. Chromatin interaction is mediated via the binding to tri-methylated histone H3 at 'Lys-4' (H3K4me3). Key regulator of hematopoiesis involved in terminal myeloid differentiation and in the regulation of hematopoietic stem cell (HSCs) self-renewal by a mechanism that involves DNA methylation. Also acts as an important cell cycle regulator, participating in cell cycle regulatory network machinery at multiple cell cycle stages including G1/S transition, S phase progression and mitotic entry. Recruited to E2F1 responsive promoters by HCFC1 where it stimulates tri-methylation of histone H3 at 'Lys-4' and transcriptional activation and thereby facilitates G1 to S phase transition. During myoblast differentiation, required to suppress inappropriate expression of S-phase-promoting genes and maintain expression of determination genes in quiescent cells. Functionally, cellular ligand for NCR2/NKp44, may play a role as a danger signal in cytotoxicity and NK-cell-mediated innate immunity. This Homo sapiens (Human) protein is Inactive histone-lysine N-methyltransferase 2E (KMT2E).